The primary structure comprises 375 residues: Succinyl-diaminopimelate desuccinylase (375 aa).

Zn(2+) is bound at residue His66. Asp68 is an active-site residue. Asp99 serves as a coordination point for Zn(2+). Catalysis depends on Glu133, which acts as the Proton acceptor. Residues Glu134, Glu162, and His348 each coordinate Zn(2+).

This sequence belongs to the peptidase M20A family. DapE subfamily. In terms of assembly, homodimer. It depends on Zn(2+) as a cofactor. Co(2+) is required as a cofactor.

The catalysed reaction is N-succinyl-(2S,6S)-2,6-diaminopimelate + H2O = (2S,6S)-2,6-diaminopimelate + succinate. The protein operates within amino-acid biosynthesis; L-lysine biosynthesis via DAP pathway; LL-2,6-diaminopimelate from (S)-tetrahydrodipicolinate (succinylase route): step 3/3. Functionally, catalyzes the hydrolysis of N-succinyl-L,L-diaminopimelic acid (SDAP), forming succinate and LL-2,6-diaminopimelate (DAP), an intermediate involved in the bacterial biosynthesis of lysine and meso-diaminopimelic acid, an essential component of bacterial cell walls. This chain is Succinyl-diaminopimelate desuccinylase, found in Escherichia coli O7:K1 (strain IAI39 / ExPEC).